Here is a 159-residue protein sequence, read N- to C-terminus: NADH-quinone oxidoreductase subunit B (159 aa).

[4Fe-4S] cluster is bound by residues C36, C37, C102, and C132.

Belongs to the complex I 20 kDa subunit family. NDH-1 is composed of 14 different subunits. Subunits NuoB, C, D, E, F, and G constitute the peripheral sector of the complex. It depends on [4Fe-4S] cluster as a cofactor.

The protein resides in the cell inner membrane. It catalyses the reaction a quinone + NADH + 5 H(+)(in) = a quinol + NAD(+) + 4 H(+)(out). Its function is as follows. NDH-1 shuttles electrons from NADH, via FMN and iron-sulfur (Fe-S) centers, to quinones in the respiratory chain. Couples the redox reaction to proton translocation (for every two electrons transferred, four hydrogen ions are translocated across the cytoplasmic membrane), and thus conserves the redox energy in a proton gradient. The chain is NADH-quinone oxidoreductase subunit B from Verminephrobacter eiseniae (strain EF01-2).